We begin with the raw amino-acid sequence, 292 residues long: Oxidative stress-responsive serine-rich protein 1 (292 aa).

The tract at residues 24–178 (ASGSVASLSV…ATQVPQASLK (155 aa)) is disordered. The segment covering 65–83 (STRKSSRGAVRTQRRRRSK) has biased composition (basic residues). A phosphothreonine mark is found at T143 and T233.

This Homo sapiens (Human) protein is Oxidative stress-responsive serine-rich protein 1 (OSER1).